We begin with the raw amino-acid sequence, 567 residues long: Malate synthase, glyoxysomal (567 aa).

R182 functions as the Proton acceptor in the catalytic mechanism. D468 acts as the Proton donor in catalysis. Positions 565 to 567 (SKL) match the Microbody targeting signal motif.

It belongs to the malate synthase family.

The protein resides in the glyoxysome. It catalyses the reaction glyoxylate + acetyl-CoA + H2O = (S)-malate + CoA + H(+). It participates in carbohydrate metabolism; glyoxylate cycle; (S)-malate from isocitrate: step 2/2. The protein is Malate synthase, glyoxysomal of Gossypium hirsutum (Upland cotton).